The primary structure comprises 478 residues: Aspartyl/glutamyl-tRNA(Asn/Gln) amidotransferase subunit B (478 aa).

This sequence belongs to the GatB/GatE family. GatB subfamily. As to quaternary structure, heterotrimer of A, B and C subunits.

The enzyme catalyses L-glutamyl-tRNA(Gln) + L-glutamine + ATP + H2O = L-glutaminyl-tRNA(Gln) + L-glutamate + ADP + phosphate + H(+). It catalyses the reaction L-aspartyl-tRNA(Asn) + L-glutamine + ATP + H2O = L-asparaginyl-tRNA(Asn) + L-glutamate + ADP + phosphate + 2 H(+). Allows the formation of correctly charged Asn-tRNA(Asn) or Gln-tRNA(Gln) through the transamidation of misacylated Asp-tRNA(Asn) or Glu-tRNA(Gln) in organisms which lack either or both of asparaginyl-tRNA or glutaminyl-tRNA synthetases. The reaction takes place in the presence of glutamine and ATP through an activated phospho-Asp-tRNA(Asn) or phospho-Glu-tRNA(Gln). This Syntrophotalea carbinolica (strain DSM 2380 / NBRC 103641 / GraBd1) (Pelobacter carbinolicus) protein is Aspartyl/glutamyl-tRNA(Asn/Gln) amidotransferase subunit B.